Reading from the N-terminus, the 1940-residue chain is MALTAEEAYLEELWREEDEQSEEATAMQQMLAHQHEQQHDALPSYQELMGQGSPAVTLRRAKAAAAANGTSSPGIRGSPSPARGPGGRLPSLAMGPTVGANVEQLKRRLQTVVAEVEGHQQRYDKVLLEANKATDLVHSMEAEIESLYVEAEELARRVPPAAERQRQVATWLAQRSAALEAQRQVLGGKQLELIEAEAALRAAETELDFMAEARNEIAAAQAAETAALSAAAATLRGKEDKAVAGYRRKQAAEAARLADVAAAAEDLAQRRIQAAEEAQAQAMERLKANTERIREGIASGRDLLAAEQSRRREAVLGLKESLAAVQADVAQQAELARVLQRQRRDLQEKEFGALVEAGMNPYEVFRRRDQEAAAARQHEAITSNIATRQLEVAAQLAREQEAYAQKLAARKREKKTREIFDREMGPAAQQARTEAYMQAHTVGGVSMLDPTGRVQPFPSEAVVVKTRRFGRGGAPEEVLQQQLQRLGDDTQPKQLLLPAKYRNTADTDAAAVAGLGRGGGSDDEDGMGSPPRSPSLTQQLAATQQSLTATASLAQQQQQAAGDRYKQLATRALTKHEQGLMEAAKTRHKGGIGAPQTQMGRTFGGDAFLPSPAVVEFKDFDVGRTVSASVQIINRSYKKNTFRVTGIPVEYCDVLDFAYKLPGYLAPGVSGEVVISFTPKAPVDIDTSLQLLADTGPFEVPIRCRTKRAALSVSPSAVDFGAGVTLGECATRTFTIANDGALEVEFRLDSPQLSEDERALLKSTANMAHLMTSATVAAAAAAAAATASGQGPRSARSFANMGVADGAAPETDTGPLVAPREERRLAHGGFTVFPCVGHLKGYSKVTFTVTFAPVVAAPAKLLLHASYKAPAMKRLALPHHEVTLTGTGRDVPVYVERPLIDFQCCMLGHLYRDVLVVRNGGKSAMKVMVVPRPELEGFFEFSPDFGFVQAGDSFPITIRFKPTPALLHACRKHVVEPEEEQILEIGMRLSVPDQSLPVPFTLRAQITNTDLLFQPPALDFGDCVMGERTAVKLLVRNPGRLPQTFGFVGLPSGLHFTPNDGFGYVLPGEALERLVSFQPPIAGPQTFSITAKTLAGRSFTLPCRANGVAPPVVLSSNRVRMPATPIGDTRTVSVVLINKTDQPQSYEFAVPADSDLTLSPHVGRVPPQSRLRVQIDYSPRPPVDGEQQGALPPPSAPNTARGPRDGGGGGAMANGNGSGGYEHYNDDGEPEDGEGDADGHTDTDSFQSPSARASPVQPLGRGGRGGRGGAAGEDEDEDEDAGELPVRGKSSSSSKASSGRRSSSPQLGGRQGLAMGRINEVPDDDDADAEAEAAAEAEQRTALAALKRIQSMGGGDPGWYRWREHAITCYIKPQSQNPTPSQSQSGQAPAASAPSDGASGAAAAAETAASSGPAAAPPPQEIHLQVATCAVLPDLVLLAPPDLPYVPLHQCHCLDFGPVPVGQRVVRRLELANEGEEPLVLGAESMDSREVFGLVNALRPVRPGASFRVMVSFTPQARTEYLEVLVLKSARTRLRLALKGAGIAPELQLGPEGVTATGLDMGDVLVGEAAARTLTVTNVCPFPLSFTMRLAGKASAADPNPTMRQAFSCHPAEGTLAQGESCEVAVSFTPFSQRPYFEDVLQVVVPNQQDQLLVPLRGRGWREAVFVAGPDYPEPQPDPFLLHHLAKQAGVALPPSVSGGGAAAGGAAVAAAAAGDKPSTPAPGIKPPATPPGGASKGKAAAAAAAAAAAAAAGASEPRELTLNFPHAIYPGEVATASFDVGSLKSTASGSAPGEVGVAELPAEAREAGWAVTDPPTAGAGGGGKVPLAAGERKPITLSYSAPAAPHPGMVAAYGHAEYRVLKLQLTLKGGLAALSGGPEGRKVVVAARCRLLPGSRPPGEPVPPGVTPAPEPVAASGPGAGAAGVKKLVPPPSPPKKAV.

Positions 52 to 90 (GSPAVTLRRAKAAAAANGTSSPGIRGSPSPARGPGGRLP) are disordered. Low complexity predominate over residues 63–90 (AAAAANGTSSPGIRGSPSPARGPGGRLP). Residues 100 to 159 (ANVEQLKRRLQTVVAEVEGHQQRYDKVLLEANKATDLVHSMEAEIESLYVEAEELARRVP) adopt a coiled-coil conformation. Disordered stretches follow at residues 512-548 (VAGL…QSLT), 1159-1336 (SPHV…AAAE), 1373-1418 (PQSQ…AAPP), 1714-1737 (AGDK…GASK), and 1894-1940 (PGSR…KKAV). Residues 535 to 548 (SLTQQLAATQQSLT) are compositionally biased toward low complexity. Over residues 1205–1220 (DGGGGGAMANGNGSGG) the composition is skewed to gly residues. The span at 1227-1236 (DGEPEDGEGD) shows a compositional bias: acidic residues. The segment covering 1260–1271 (GRGGRGGRGGAA) has biased composition (gly residues). The span at 1272 to 1282 (GEDEDEDEDAG) shows a compositional bias: acidic residues. The segment covering 1287 to 1304 (RGKSSSSSKASSGRRSSS) has biased composition (low complexity). The segment covering 1321-1335 (VPDDDDADAEAEAAA) has biased composition (acidic residues). Residues 1373–1414 (PQSQNPTPSQSQSGQAPAASAPSDGASGAAAAAETAASSGPA) show a composition bias toward low complexity. 2 stretches are compositionally biased toward pro residues: residues 1720–1731 (TPAPGIKPPATP) and 1896–1912 (SRPP…PAPE). Residues 1913 to 1929 (PVAASGPGAGAAGVKKL) are compositionally biased toward low complexity. A compositionally biased stretch (pro residues) spans 1930–1940 (VPPPSPPKKAV).

The protein belongs to the CFAP74 family. In terms of assembly, part of the PDCP1 complex composed of CFAP46, CFAP54, CFAP74 and CFAP221; the PDCP1 complex binds calmodulin.

It localises to the cytoplasm. The protein localises to the cytoskeleton. The protein resides in the cilium axoneme. As part of the central apparatus of the cilium axoneme may play a role in cilium movement and thereby cell motility. The polypeptide is Cilia- and flagella-associated protein 74 (Chlamydomonas reinhardtii (Chlamydomonas smithii)).